The chain runs to 376 residues: Succinyl-diaminopimelate desuccinylase (376 aa).

H66 is a binding site for Zn(2+). D68 is an active-site residue. D99 is a Zn(2+) binding site. E133 (proton acceptor) is an active-site residue. 3 residues coordinate Zn(2+): E134, E162, and H348.

The protein belongs to the peptidase M20A family. DapE subfamily. Homodimer. Zn(2+) is required as a cofactor. The cofactor is Co(2+).

It catalyses the reaction N-succinyl-(2S,6S)-2,6-diaminopimelate + H2O = (2S,6S)-2,6-diaminopimelate + succinate. The protein operates within amino-acid biosynthesis; L-lysine biosynthesis via DAP pathway; LL-2,6-diaminopimelate from (S)-tetrahydrodipicolinate (succinylase route): step 3/3. Its function is as follows. Catalyzes the hydrolysis of N-succinyl-L,L-diaminopimelic acid (SDAP), forming succinate and LL-2,6-diaminopimelate (DAP), an intermediate involved in the bacterial biosynthesis of lysine and meso-diaminopimelic acid, an essential component of bacterial cell walls. In Xanthomonas oryzae pv. oryzae (strain PXO99A), this protein is Succinyl-diaminopimelate desuccinylase.